The primary structure comprises 149 residues: Large ribosomal subunit protein bL9 (149 aa).

This sequence belongs to the bacterial ribosomal protein bL9 family.

Functionally, binds to the 23S rRNA. The sequence is that of Large ribosomal subunit protein bL9 from Geobacillus kaustophilus (strain HTA426).